A 91-amino-acid polypeptide reads, in one-letter code: Small ribosomal subunit protein bS16 (91 aa).

It belongs to the bacterial ribosomal protein bS16 family.

In Staphylococcus aureus (strain Mu3 / ATCC 700698), this protein is Small ribosomal subunit protein bS16.